The chain runs to 160 residues: Large ribosomal subunit protein uL22c (160 aa).

The protein belongs to the universal ribosomal protein uL22 family. In terms of assembly, part of the 50S ribosomal subunit.

Its subcellular location is the plastid. The protein resides in the chloroplast. Its function is as follows. This protein binds specifically to 23S rRNA. Functionally, the globular domain of the protein is located near the polypeptide exit tunnel on the outside of the subunit, while an extended beta-hairpin is found that lines the wall of the exit tunnel in the center of the 70S ribosome. The protein is Large ribosomal subunit protein uL22c (rpl22) of Draba nemorosa (Woodland whitlowgrass).